Consider the following 89-residue polypeptide: Small ribosomal subunit protein uS15 (89 aa).

The protein belongs to the universal ribosomal protein uS15 family. Part of the 30S ribosomal subunit. Forms a bridge to the 50S subunit in the 70S ribosome, contacting the 23S rRNA.

In terms of biological role, one of the primary rRNA binding proteins, it binds directly to 16S rRNA where it helps nucleate assembly of the platform of the 30S subunit by binding and bridging several RNA helices of the 16S rRNA. Its function is as follows. Forms an intersubunit bridge (bridge B4) with the 23S rRNA of the 50S subunit in the ribosome. This chain is Small ribosomal subunit protein uS15, found in Rhodospirillum centenum (strain ATCC 51521 / SW).